Consider the following 337-residue polypeptide: DNA-directed RNA polymerase subunit alpha (337 aa).

The interval 1-231 (MRNITTSAYT…KQLSVFDKIT (231 aa)) is alpha N-terminal domain (alpha-NTD). The interval 248–337 (NTKLLQNITD…IAELKAQNEG (90 aa)) is alpha C-terminal domain (alpha-CTD).

Belongs to the RNA polymerase alpha chain family. In terms of assembly, homodimer. The RNAP catalytic core consists of 2 alpha, 1 beta, 1 beta' and 1 omega subunit. When a sigma factor is associated with the core the holoenzyme is formed, which can initiate transcription.

The catalysed reaction is RNA(n) + a ribonucleoside 5'-triphosphate = RNA(n+1) + diphosphate. Functionally, DNA-dependent RNA polymerase catalyzes the transcription of DNA into RNA using the four ribonucleoside triphosphates as substrates. This Campylobacter jejuni subsp. jejuni serotype O:6 (strain 81116 / NCTC 11828) protein is DNA-directed RNA polymerase subunit alpha.